Consider the following 51-residue polypeptide: Suberization-associated anionic peroxidase 1 (51 aa).

His30 provides a ligand contact to heme. Residue Thr31 coordinates Ca(2+).

Belongs to the peroxidase family. Classical plant (class III) peroxidase subfamily. It depends on heme b as a cofactor. Requires Ca(2+) as cofactor.

The protein resides in the secreted. The enzyme catalyses 2 a phenolic donor + H2O2 = 2 a phenolic radical donor + 2 H2O. Functionally, removal of H(2)O(2), oxidation of toxic reductants, biosynthesis and degradation of lignin, suberization, auxin catabolism, response to environmental stresses such as wounding, pathogen attack and oxidative stress. These functions might be dependent on each isozyme/isoform in each plant tissue. In terms of biological role, suggested to catalyze the deposition of the aromatic residues of suberin on the cell wall and thus play a role in cell-suberization. This is Suberization-associated anionic peroxidase 1 from Capsicum annuum (Capsicum pepper).